Here is a 666-residue protein sequence, read N- to C-terminus: uncharacterized protein (666 aa).

The region spanning 263–553 is the RNB domain; it reads RFDLTTLKTY…THFQMKAYLR (291 aa).

This sequence belongs to the RNR ribonuclease family.

This is an uncharacterized protein from Synechocystis sp. (strain ATCC 27184 / PCC 6803 / Kazusa).